An 89-amino-acid polypeptide reads, in one-letter code: Porphobilinogen deaminase (89 aa).

The protein belongs to the HMBS family. As to quaternary structure, monomer. It depends on dipyrromethane as a cofactor.

It catalyses the reaction 4 porphobilinogen + H2O = hydroxymethylbilane + 4 NH4(+). It participates in porphyrin-containing compound metabolism; protoporphyrin-IX biosynthesis; coproporphyrinogen-III from 5-aminolevulinate: step 2/4. Its function is as follows. Tetrapolymerization of the monopyrrole PBG into the hydroxymethylbilane pre-uroporphyrinogen in several discrete steps. The polypeptide is Porphobilinogen deaminase (hemC) (Dickeya chrysanthemi (Pectobacterium chrysanthemi)).